Reading from the N-terminus, the 635-residue chain is Chaperone protein HtpG (635 aa).

Positions 1–344 (MSETATTNKE…SNDLPLNVSR (344 aa)) are a; substrate-binding. Residues 345–561 (EILQDNKITQ…DYEMGTQMAK (217 aa)) are b. Residues 562–635 (LLAAAGQPVP…AVNQLLAPSH (74 aa)) are c.

Belongs to the heat shock protein 90 family. Homodimer.

It localises to the cytoplasm. Molecular chaperone. Has ATPase activity. The sequence is that of Chaperone protein HtpG from Vibrio cholerae serotype O1 (strain ATCC 39541 / Classical Ogawa 395 / O395).